Reading from the N-terminus, the 123-residue chain is Large ribosomal subunit protein bL21 (123 aa).

The protein belongs to the bacterial ribosomal protein bL21 family. As to quaternary structure, part of the 50S ribosomal subunit. Contacts protein L20.

Its function is as follows. This protein binds to 23S rRNA in the presence of protein L20. This chain is Large ribosomal subunit protein bL21, found in Rhizobium meliloti (strain 1021) (Ensifer meliloti).